Reading from the N-terminus, the 178-residue chain is Inorganic pyrophosphatase (178 aa).

3 residues coordinate substrate: Lys30, Arg44, and Tyr56. Residues Asp66, Asp71, and Asp103 each coordinate Mg(2+). A substrate-binding site is contributed by Tyr142.

Belongs to the PPase family. As to quaternary structure, homohexamer. Mg(2+) is required as a cofactor.

Its subcellular location is the cytoplasm. It carries out the reaction diphosphate + H2O = 2 phosphate + H(+). Functionally, catalyzes the hydrolysis of inorganic pyrophosphate (PPi) forming two phosphate ions. The chain is Inorganic pyrophosphatase from Xylella fastidiosa (strain 9a5c).